The sequence spans 124 residues: Acidic phospholipase A2 (124 aa).

7 disulfides stabilise this stretch: cysteine 26–cysteine 117, cysteine 28–cysteine 44, cysteine 43–cysteine 97, cysteine 49–cysteine 124, cysteine 50–cysteine 90, cysteine 57–cysteine 83, and cysteine 77–cysteine 88. Ca(2+)-binding residues include tyrosine 27, glycine 29, and glycine 31. Histidine 47 is a catalytic residue. A Ca(2+)-binding site is contributed by aspartate 48. Glutamate 89 is an active-site residue.

This sequence belongs to the phospholipase A2 family. Group II subfamily. D49 sub-subfamily. Ca(2+) serves as cofactor. Expressed by the venom gland.

The protein localises to the secreted. It carries out the reaction a 1,2-diacyl-sn-glycero-3-phosphocholine + H2O = a 1-acyl-sn-glycero-3-phosphocholine + a fatty acid + H(+). In terms of biological role, snake venom phospholipase A2 (PLA2) that inhibits collagen- and ADP-induced platelet aggregation. PLA2 catalyzes the calcium-dependent hydrolysis of the 2-acyl groups in 3-sn-phosphoglycerides. The protein is Acidic phospholipase A2 of Bothrops jararaca (Jararaca).